Consider the following 695-residue polypeptide: Variediene synthase (695 aa).

A disordered region spans residues 1 to 23; sequence MVPTSLSPDDTSDPVPRSSSDIQ. Residues 7–332 are terpene cyclase; sequence SPDDTSDPVP…PRYHPWLCEE (326 aa). Mg(2+) is bound at residue aspartate 98. Residues aspartate 98, 184–187, asparagine 228, 232–236, and 324–325 contribute to the substrate site; these read RIID, SFDIE, and RY. Positions 98 to 102 match the DDXXD 1 motif; the sequence is DNVVE. The short motif at 228–236 is the NSE/DTE element; it reads NDYFSFDIE. Residues 353 to 392 are disordered; sequence RRSISGDSISSESSVWSGASDRSARSSVSSAPSLDEGKEP. A compositionally biased stretch (low complexity) spans 357-385; the sequence is SGDSISSESSVWSGASDRSARSSVSSAPS. Isopentenyl diphosphate is bound by residues lysine 415, arginine 418, and histidine 447. 2 residues coordinate Mg(2+): aspartate 454 and aspartate 458. The DDXXD 2 motif lies at 454-458; sequence DDIED. A dimethylallyl diphosphate-binding site is contributed by arginine 463. Arginine 464 contributes to the isopentenyl diphosphate binding site. Residues lysine 541, threonine 542, glutamine 579, asparagine 586, lysine 595, and lysine 605 each coordinate dimethylallyl diphosphate.

It in the N-terminal section; belongs to the terpene synthase family. The protein in the C-terminal section; belongs to the FPP/GGPP synthase family. As to quaternary structure, hexamer. It depends on Mg(2+) as a cofactor.

It carries out the reaction isopentenyl diphosphate + (2E,6E)-farnesyl diphosphate = (2E,6E,10E)-geranylgeranyl diphosphate + diphosphate. The catalysed reaction is (2E,6E,10E)-geranylgeranyl diphosphate = variediene + diphosphate. It participates in secondary metabolite biosynthesis; terpenoid biosynthesis. Its function is as follows. Bifunctional terpene synthase converts DMAPP and IPP, and also GGPP, into variediene as a single product. The C-terminal prenyltransferase domain of AbVS catalyzes formation of GGPP, whereas the N-terminal terpene cyclase domain catalyzes the cyclization of GGPP to variediene. This Aspergillus brasiliensis (strain CBS 101740 / IMI 381727 / IBT 21946) protein is Variediene synthase.